The primary structure comprises 405 residues: NADH-quinone oxidoreductase subunit D (405 aa).

The protein belongs to the complex I 49 kDa subunit family. In terms of assembly, NDH-1 is composed of 14 different subunits. Subunits NuoB, C, D, E, F, and G constitute the peripheral sector of the complex.

The protein resides in the cell inner membrane. The catalysed reaction is a quinone + NADH + 5 H(+)(in) = a quinol + NAD(+) + 4 H(+)(out). In terms of biological role, NDH-1 shuttles electrons from NADH, via FMN and iron-sulfur (Fe-S) centers, to quinones in the respiratory chain. The immediate electron acceptor for the enzyme in this species is believed to be ubiquinone. Couples the redox reaction to proton translocation (for every two electrons transferred, four hydrogen ions are translocated across the cytoplasmic membrane), and thus conserves the redox energy in a proton gradient. The sequence is that of NADH-quinone oxidoreductase subunit D from Ruegeria pomeroyi (strain ATCC 700808 / DSM 15171 / DSS-3) (Silicibacter pomeroyi).